Reading from the N-terminus, the 476-residue chain is Serine/threonine-protein kinase PknF (476 aa).

Phosphothreonine; by autocatalysis occurs at positions 8 and 13. Residues 12–279 form the Protein kinase domain; sequence FTIVRQLGSG…FARALGHRLG (268 aa). ATP contacts are provided by residues 18–26 and lysine 41; that span reads LGSGGMGEV. Residue aspartate 137 is the Proton acceptor of the active site. 3 positions are modified to phosphothreonine; by autocatalysis: threonine 173, threonine 175, and threonine 287. A Phosphoserine; by autocatalysis modification is found at serine 290. Residues 332-376 form a disordered region; it reads ADDERAAQPARTRTTTSAGTTTSVAPASTTRPAPTTPTTTGAADT. Low complexity predominate over residues 338 to 376; sequence AQPARTRTTTSAGTTTSVAPASTTRPAPTTPTTTGAADT.

Belongs to the protein kinase superfamily. Ser/Thr protein kinase family. Post-translationally, dephosphorylated by PstP.

It carries out the reaction L-seryl-[protein] + ATP = O-phospho-L-seryl-[protein] + ADP + H(+). The catalysed reaction is L-threonyl-[protein] + ATP = O-phospho-L-threonyl-[protein] + ADP + H(+). The polypeptide is Serine/threonine-protein kinase PknF (pknF) (Mycobacterium bovis (strain ATCC BAA-935 / AF2122/97)).